Here is a 428-residue protein sequence, read N- to C-terminus: Histidine--tRNA ligase (428 aa).

It belongs to the class-II aminoacyl-tRNA synthetase family. Homodimer.

It localises to the cytoplasm. The enzyme catalyses tRNA(His) + L-histidine + ATP = L-histidyl-tRNA(His) + AMP + diphosphate + H(+). This is Histidine--tRNA ligase from Halalkalibacterium halodurans (strain ATCC BAA-125 / DSM 18197 / FERM 7344 / JCM 9153 / C-125) (Bacillus halodurans).